Reading from the N-terminus, the 456-residue chain is Bifunctional protein GlmU (456 aa).

The interval 1–229 is pyrophosphorylase; the sequence is MTKKALSAVI…VMEVEGANNR (229 aa). UDP-N-acetyl-alpha-D-glucosamine is bound by residues 11 to 14, lysine 25, glutamine 76, 81 to 82, 103 to 105, glycine 140, glutamate 154, asparagine 169, and asparagine 227; these read LAAG, GT, and YGD. A Mg(2+)-binding site is contributed by aspartate 105. Mg(2+) is bound at residue asparagine 227. Positions 230–250 are linker; that stretch reads LQLAALERYFQNKQASKLLLE. An N-acetyltransferase region spans residues 251 to 456; sequence GVMIYDPARF…QGWQRPIKKK (206 aa). Residues arginine 333 and lysine 351 each contribute to the UDP-N-acetyl-alpha-D-glucosamine site. Histidine 363 functions as the Proton acceptor in the catalytic mechanism. Residues tyrosine 366 and asparagine 377 each contribute to the UDP-N-acetyl-alpha-D-glucosamine site. Acetyl-CoA contacts are provided by residues alanine 380, 386–387, serine 405, alanine 423, and arginine 440; that span reads NY.

This sequence in the N-terminal section; belongs to the N-acetylglucosamine-1-phosphate uridyltransferase family. In the C-terminal section; belongs to the transferase hexapeptide repeat family. In terms of assembly, homotrimer. Mg(2+) serves as cofactor.

It is found in the cytoplasm. It catalyses the reaction alpha-D-glucosamine 1-phosphate + acetyl-CoA = N-acetyl-alpha-D-glucosamine 1-phosphate + CoA + H(+). It carries out the reaction N-acetyl-alpha-D-glucosamine 1-phosphate + UTP + H(+) = UDP-N-acetyl-alpha-D-glucosamine + diphosphate. It functions in the pathway nucleotide-sugar biosynthesis; UDP-N-acetyl-alpha-D-glucosamine biosynthesis; N-acetyl-alpha-D-glucosamine 1-phosphate from alpha-D-glucosamine 6-phosphate (route II): step 2/2. Its pathway is nucleotide-sugar biosynthesis; UDP-N-acetyl-alpha-D-glucosamine biosynthesis; UDP-N-acetyl-alpha-D-glucosamine from N-acetyl-alpha-D-glucosamine 1-phosphate: step 1/1. The protein operates within bacterial outer membrane biogenesis; LPS lipid A biosynthesis. Its function is as follows. Catalyzes the last two sequential reactions in the de novo biosynthetic pathway for UDP-N-acetylglucosamine (UDP-GlcNAc). The C-terminal domain catalyzes the transfer of acetyl group from acetyl coenzyme A to glucosamine-1-phosphate (GlcN-1-P) to produce N-acetylglucosamine-1-phosphate (GlcNAc-1-P), which is converted into UDP-GlcNAc by the transfer of uridine 5-monophosphate (from uridine 5-triphosphate), a reaction catalyzed by the N-terminal domain. The polypeptide is Bifunctional protein GlmU (Haemophilus influenzae (strain ATCC 51907 / DSM 11121 / KW20 / Rd)).